Reading from the N-terminus, the 138-residue chain is Nucleoside diphosphate kinase (138 aa).

6 residues coordinate ATP: Lys-9, Phe-57, Arg-85, Thr-91, Arg-102, and Asn-112. His-120 (pros-phosphohistidine intermediate) is an active-site residue.

Belongs to the NDK family. In terms of assembly, homotetramer. Mg(2+) serves as cofactor.

Its subcellular location is the cytoplasm. The catalysed reaction is a 2'-deoxyribonucleoside 5'-diphosphate + ATP = a 2'-deoxyribonucleoside 5'-triphosphate + ADP. The enzyme catalyses a ribonucleoside 5'-diphosphate + ATP = a ribonucleoside 5'-triphosphate + ADP. In terms of biological role, major role in the synthesis of nucleoside triphosphates other than ATP. The ATP gamma phosphate is transferred to the NDP beta phosphate via a ping-pong mechanism, using a phosphorylated active-site intermediate. The protein is Nucleoside diphosphate kinase of Streptococcus agalactiae serotype V (strain ATCC BAA-611 / 2603 V/R).